A 309-amino-acid polypeptide reads, in one-letter code: Ribosomal RNA small subunit methyltransferase H (309 aa).

S-adenosyl-L-methionine-binding positions include 33–35 (GGH), Asp-53, Phe-79, Asp-100, and Gln-107.

It belongs to the methyltransferase superfamily. RsmH family.

It localises to the cytoplasm. It catalyses the reaction cytidine(1402) in 16S rRNA + S-adenosyl-L-methionine = N(4)-methylcytidine(1402) in 16S rRNA + S-adenosyl-L-homocysteine + H(+). In terms of biological role, specifically methylates the N4 position of cytidine in position 1402 (C1402) of 16S rRNA. The chain is Ribosomal RNA small subunit methyltransferase H from Clostridium botulinum (strain Okra / Type B1).